The primary structure comprises 451 residues: MNPNQKIITIGSMSLTIATVCFLMQIAILATNVTLHFRQNEESIPAYNQTTPCKPIIIERNIKYRNWSKPQCQITGFAPFSKDNSIRLSAGGGIWVTREPYVSCDPSKCYQFALGQGTTLDHNHSNGTIHDRTPHRTLLMNELGVPFHLGTRQVCIAWSRSSCHDGKAWLHVCVTGDDRNATASFIYNGMLVDSIGSWSQNILRTQESECVCINGTCTVVMTDGSASGKADTRILFIREGKIVHISPLSGSAQHIEECSCYPKSYPNVRCVCRDNWKGSNRPVKLDINMADYSIDSSYVCSGLVGDTPRNDDSSSSSNCRDPNNERGNPGVKGWAFDIGDDVWMGRTISKDSRSGYETFRVISGWATANSKSQTNRQVIVDNNNWSGYSGIFSVESKSCINRCFYVELIRGRPQENRVWWTTNSIVVFCGTSGTYGTGSWPDGANINFMPL.

The Intravirion segment spans residues 1–6 (MNPNQK). A helical membrane pass occupies residues 7–29 (IITIGSMSLTIATVCFLMQIAIL). The tract at residues 11–33 (GSMSLTIATVCFLMQIAILATNV) is involved in apical transport and lipid raft association. The Virion surface segment spans residues 30–451 (ATNVTLHFRQ…DGANINFMPL (422 aa)). N-linked (GlcNAc...) asparagine; by host glycans are attached at residues N32, N48, and N66. The tract at residues 36-68 (HFRQNEESIPAYNQTTPCKPIIIERNIKYRNWS) is hypervariable stalk region. Positions 71–451 (QCQITGFAPF…DGANINFMPL (381 aa)) are head of neuraminidase. Intrachain disulfides connect C72–C399, C104–C109, C163–C210, C212–C217, C258–C272, C260–C270, C300–C319, and C403–C429. Substrate is bound at residue R98. Residues N123 and N126 are each glycosylated (N-linked (GlcNAc...) asparagine; by host). D131 acts as the Proton donor/acceptor in catalysis. R132 contributes to the substrate binding site. N-linked (GlcNAc...) asparagine; by host glycans are attached at residues N180 and N214. Position 256 to 257 (256 to 257 (EE)) interacts with substrate. R273 serves as a coordination point for substrate. D274, G278, and D306 together coordinate Ca(2+). Positions 307 to 331 (TPRNDDSSSSSNCRDPNNERGNPGV) are disordered. Residue R353 coordinates substrate. N384 carries N-linked (GlcNAc...) asparagine; by host glycosylation. Y388 (nucleophile) is an active-site residue.

The protein belongs to the glycosyl hydrolase 34 family. As to quaternary structure, homotetramer. Ca(2+) is required as a cofactor. Post-translationally, N-glycosylated.

Its subcellular location is the virion membrane. It localises to the host apical cell membrane. The catalysed reaction is Hydrolysis of alpha-(2-&gt;3)-, alpha-(2-&gt;6)-, alpha-(2-&gt;8)- glycosidic linkages of terminal sialic acid residues in oligosaccharides, glycoproteins, glycolipids, colominic acid and synthetic substrates.. Its activity is regulated as follows. Inhibited by the neuraminidase inhibitors zanamivir (Relenza) and oseltamivir (Tamiflu). These drugs interfere with the release of progeny virus from infected cells and are effective against all influenza strains. Resistance to neuraminidase inhibitors is quite rare. Catalyzes the removal of terminal sialic acid residues from viral and cellular glycoconjugates. Cleaves off the terminal sialic acids on the glycosylated HA during virus budding to facilitate virus release. Additionally helps virus spread through the circulation by further removing sialic acids from the cell surface. These cleavages prevent self-aggregation and ensure the efficient spread of the progeny virus from cell to cell. Otherwise, infection would be limited to one round of replication. Described as a receptor-destroying enzyme because it cleaves a terminal sialic acid from the cellular receptors. May facilitate viral invasion of the upper airways by cleaving the sialic acid moieties on the mucin of the airway epithelial cells. Likely to plays a role in the budding process through its association with lipid rafts during intracellular transport. May additionally display a raft-association independent effect on budding. Plays a role in the determination of host range restriction on replication and virulence. Sialidase activity in late endosome/lysosome traffic seems to enhance virus replication. The polypeptide is Neuraminidase (Aves).